A 2036-amino-acid polypeptide reads, in one-letter code: Putative mediator of RNA polymerase II transcription subunit 24 (2036 aa).

8 disordered regions span residues 51–70 (NNNNSNNNNNNNNNNNNNNV), 159–184 (DNIENSNNNNNNNNNNNNNNSNNNIG), 212–451 (SPSP…QTTT), 501–580 (KSVN…NNNN), 754–840 (NLKN…SHQK), 928–1124 (NNNN…NKDL), 1375–1419 (NNKN…NNNN), and 1565–1608 (NSSA…NGDT). Low complexity predominate over residues 212 to 229 (SPSPSSSSSSSTSPSSQQ). Residues 260-270 (EIMKVKEEPIK) are compositionally biased toward basic and acidic residues. Composition is skewed to low complexity over residues 273–291 (TTTTTTSTTTTTSTTSTTT), 300–311 (TNGNGEETTITT), 387–451 (QPQP…QTTT), 501–539 (KSVNNNNNNNNNNNNNNNNNNNNNYNNNNNDSMDQNSNN), 547–580 (NNNNINNNNNNNNNNNNNNNNNNNNNNNNNNNNN), and 754–770 (NLKNNKNNNNNNNNSNG). Residues 505 to 584 (NNNNNNNNNN…NNNNNNINNI (80 aa)) are a coiled coil. Residues 778–787 (GSSTDGSNKL) show a composition bias toward polar residues. Composition is skewed to low complexity over residues 788–808 (SSTNIEEGNNNNNSSTHLNGN) and 928–943 (NNNNNTNTNNINNNKN). Residues 943–977 (NKNSKKSNNKNKNNKNNNKKNKNNNNNNNNNNNNN) adopt a coiled-coil conformation. The segment covering 944–964 (KNSKKSNNKNKNNKNNNKKNK) has biased composition (basic residues). Composition is skewed to low complexity over residues 965-999 (NNNNNNNNNNNNNNNNNNNNNNNNNNNNNNNNNNN), 1017-1118 (NNNN…NNNN), 1385-1419 (SNNSSNNSINNINNNNNNNNNNNNNNNNNNNNNNN), 1565-1584 (NSSAYSTTTTTSASTSLPKS), and 1594-1608 (SSNTSTTTTKNNGDT). Residues 1915-1968 (SKNQSLKKKQKLKQKKQQHNNNNGGEYNIDQDHIEQIQQQQQQYQKQQQQRKDE) adopt a coiled-coil conformation.

The protein belongs to the Mediator complex subunit 24 family. In terms of assembly, component of the Mediator complex.

Its subcellular location is the nucleus. Its function is as follows. Component of the Mediator complex, a coactivator involved in the regulated transcription of nearly all RNA polymerase II-dependent genes. Mediator functions as a bridge to convey information from gene-specific regulatory proteins to the basal RNA polymerase II transcription machinery. Mediator is recruited to promoters by direct interactions with regulatory proteins and serves as a scaffold for the assembly of a functional preinitiation complex with RNA polymerase II and the general transcription factors. The polypeptide is Putative mediator of RNA polymerase II transcription subunit 24 (med24) (Dictyostelium discoideum (Social amoeba)).